Reading from the N-terminus, the 324-residue chain is Palmitoyltransferase SWF1 (324 aa).

A topological domain (lumenal) is located at residue M1. A helical transmembrane segment spans residues 2–22 (FLLFLLFVVSQVGLLVFSPKF). Topologically, residues 23-49 (KDLILFRWYYQHIYYPLFTDYTRYRWK) are cytoplasmic. The helical transmembrane segment at 50–70 (YWLVPGFYACILIFCVHLFYN) threads the bilayer. Over 71-84 (KLNDTVNPYLYSLE) the chain is Lumenal. The helical transmembrane segment at 85–105 (KAFIPITIAFTSLTGVASVFV) threads the bilayer. The Cytoplasmic portion of the chain corresponds to 106–173 (KPLGLQAGPQ…VGYGNYEYFY (68 aa)). Residues 127-177 (AVCQTCKTIKVPRSKHCPICERCIPLHDHHCIWINNCVGYGNYEYFYSFLL) enclose the DHHC domain. The chain crosses the membrane as a helical span at residues 174-194 (SFLLSNCLLLTYASLRLLTLF). Residues 195-203 (RITAFKKDK) lie on the Lumenal side of the membrane. The chain crosses the membrane as a helical span at residues 204–224 (FFLSLFLLTTAFSLIAIVFTY). Over 225 to 324 (YQLKLVNDGM…NLKERIHLLD (100 aa)) the chain is Cytoplasmic.

This sequence belongs to the DHHC palmitoyltransferase family. SWF1 subfamily.

Its subcellular location is the endoplasmic reticulum membrane. It catalyses the reaction L-cysteinyl-[protein] + hexadecanoyl-CoA = S-hexadecanoyl-L-cysteinyl-[protein] + CoA. Its function is as follows. Palmitoyltransferase that targets several endosomal SNAREs. Palmitoylates the SNAREs at cysteine residues close to the cytoplasmic end of their transmembrane domain. May have a role in the cellular quality control of transmembrane domain-containing proteins. The chain is Palmitoyltransferase SWF1 (SWF1) from Kluyveromyces lactis (strain ATCC 8585 / CBS 2359 / DSM 70799 / NBRC 1267 / NRRL Y-1140 / WM37) (Yeast).